The primary structure comprises 712 residues: Effector protein HopM1 (712 aa).

Residues 22–58 (DTVPAQTAHPNAVTAGMNPPLTPDQSGSHATESSSAG) form a disordered region. Positions 44 to 57 (PDQSGSHATESSSA) are enriched in polar residues.

In terms of assembly, interacts with the chaperone ShcM. Interacts with host plant BIG5/ATMIN7.

The protein resides in the secreted. The protein localises to the host membrane. In terms of biological role, involved in the suppression of basal resistance and promotion of disease symptoms in plants. Mediates the ubiquitination and degradation, via the host proteasome, of a low-abundance immunity-associated protein in Arabidopsis thaliana. May be involved in the inhibition of a host vesicle trafficking pathway. This chain is Effector protein HopM1 (hopM1), found in Pseudomonas syringae pv. tomato (strain ATCC BAA-871 / DC3000).